A 205-amino-acid chain; its full sequence is Holliday junction branch migration complex subunit RuvA (205 aa).

Positions 1 to 64 are domain I; it reads MIGRLRGVLV…EDAQLLYGFI (64 aa). The interval 65–143 is domain II; sequence TKQERALFRL…SLMEASAGSE (79 aa). Residues 144–156 form a flexible linker region; the sequence is REFVLQSNYSPAP. A domain III region spans residues 157-205; the sequence is TVNSAEEDAISALISLGYKPPQASKSVSAAYKEGMDSETLIKAALKSML.

This sequence belongs to the RuvA family. In terms of assembly, homotetramer. Forms an RuvA(8)-RuvB(12)-Holliday junction (HJ) complex. HJ DNA is sandwiched between 2 RuvA tetramers; dsDNA enters through RuvA and exits via RuvB. An RuvB hexamer assembles on each DNA strand where it exits the tetramer. Each RuvB hexamer is contacted by two RuvA subunits (via domain III) on 2 adjacent RuvB subunits; this complex drives branch migration. In the full resolvosome a probable DNA-RuvA(4)-RuvB(12)-RuvC(2) complex forms which resolves the HJ.

It is found in the cytoplasm. The RuvA-RuvB-RuvC complex processes Holliday junction (HJ) DNA during genetic recombination and DNA repair, while the RuvA-RuvB complex plays an important role in the rescue of blocked DNA replication forks via replication fork reversal (RFR). RuvA specifically binds to HJ cruciform DNA, conferring on it an open structure. The RuvB hexamer acts as an ATP-dependent pump, pulling dsDNA into and through the RuvAB complex. HJ branch migration allows RuvC to scan DNA until it finds its consensus sequence, where it cleaves and resolves the cruciform DNA. This is Holliday junction branch migration complex subunit RuvA from Shewanella baltica (strain OS223).